A 312-amino-acid polypeptide reads, in one-letter code: Porphobilinogen deaminase (312 aa).

At cysteine 241 the chain carries S-(dipyrrolylmethanemethyl)cysteine.

This sequence belongs to the HMBS family. Monomer. It depends on dipyrromethane as a cofactor.

The enzyme catalyses 4 porphobilinogen + H2O = hydroxymethylbilane + 4 NH4(+). It participates in porphyrin-containing compound metabolism; protoporphyrin-IX biosynthesis; coproporphyrinogen-III from 5-aminolevulinate: step 2/4. In terms of biological role, tetrapolymerization of the monopyrrole PBG into the hydroxymethylbilane pre-uroporphyrinogen in several discrete steps. In Cytophaga hutchinsonii (strain ATCC 33406 / DSM 1761 / CIP 103989 / NBRC 15051 / NCIMB 9469 / D465), this protein is Porphobilinogen deaminase.